Here is a 211-residue protein sequence, read N- to C-terminus: Transcription factor bHLH150 (211 aa).

Positions 1–15 are enriched in polar residues; that stretch reads MSSEQGNGSNPSTSP. Residues 1-23 are disordered; that stretch reads MSSEQGNGSNPSTSPEVEGTKTI. In terms of domain architecture, bHLH spans 135–184; that stretch reads AIRGSGGSGRRRKLSAVGNRVRVLGGLVPGCRRTALPELLDETADYIAAL.

Homodimer. Interacts with PRE3 and ASK7. Phosphorylated by ASK7.

Its subcellular location is the nucleus. In terms of biological role, atypical bHLH transcription factor probably unable to bind DNA. Negatively regulates brassinosteroid signaling. In Arabidopsis thaliana (Mouse-ear cress), this protein is Transcription factor bHLH150 (BHLH150).